The sequence spans 473 residues: Photosystem II CP43 reaction center protein (473 aa).

Residues 1 to 14 (MKTLYSLRRFYPVE) constitute a propeptide that is removed on maturation. Thr-15 is subject to N-acetylthreonine. Thr-15 carries the post-translational modification Phosphothreonine. 5 consecutive transmembrane segments (helical) span residues 69 to 93 (LFEV…PHLA), 134 to 155 (LLGP…KDRN), 178 to 200 (KALY…RKIT), 255 to 275 (KPFA…LSYS), and 291 to 312 (WFNN…ASQA). A [CaMn4O5] cluster-binding site is contributed by Glu-367. A helical membrane pass occupies residues 447 to 471 (RARAAAAGFEKGIDRDFEPVLSMTP).

This sequence belongs to the PsbB/PsbC family. PsbC subfamily. As to quaternary structure, PSII is composed of 1 copy each of membrane proteins PsbA, PsbB, PsbC, PsbD, PsbE, PsbF, PsbH, PsbI, PsbJ, PsbK, PsbL, PsbM, PsbT, PsbX, PsbY, PsbZ, Psb30/Ycf12, at least 3 peripheral proteins of the oxygen-evolving complex and a large number of cofactors. It forms dimeric complexes. Requires Binds multiple chlorophylls and provides some of the ligands for the Ca-4Mn-5O cluster of the oxygen-evolving complex. It may also provide a ligand for a Cl- that is required for oxygen evolution. PSII binds additional chlorophylls, carotenoids and specific lipids. as cofactor.

It localises to the plastid. The protein resides in the chloroplast thylakoid membrane. Functionally, one of the components of the core complex of photosystem II (PSII). It binds chlorophyll and helps catalyze the primary light-induced photochemical processes of PSII. PSII is a light-driven water:plastoquinone oxidoreductase, using light energy to abstract electrons from H(2)O, generating O(2) and a proton gradient subsequently used for ATP formation. This chain is Photosystem II CP43 reaction center protein, found in Vitis vinifera (Grape).